The sequence spans 37 residues: Mu-agatoxin-Aa1d (37 aa).

4 cysteine pairs are disulfide-bonded: Cys2–Cys18, Cys9–Cys23, Cys17–Cys33, and Cys25–Cys31. The residue at position 37 (Asn37) is an Asparagine amide.

Belongs to the neurotoxin 07 (Beta/delta-agtx) family. 03 (aga-4) subfamily. Aga sub-subfamily. As to expression, expressed by the venom gland.

It localises to the secreted. Insecticidal neurotoxin that induces an irreversible spastic paralysis when injected into insects. Modifies presynaptic voltage-gated sodium channels (Nav), causing them to open at the normal resting potential of the nerve. This leads to spontaneous release of neurotransmitter and repetitive action potentials in motor neurons. The protein is Mu-agatoxin-Aa1d of Agelenopsis aperta (North American funnel-web spider).